A 396-amino-acid chain; its full sequence is Phosphoglycerate kinase (396 aa).

Residues 21 to 23 (DFN), Arg36, 59 to 62 (HLGK), Arg119, and Arg156 contribute to the substrate site. Residues Lys206, Glu325, and 352 to 355 (GGDS) each bind ATP.

The protein belongs to the phosphoglycerate kinase family. As to quaternary structure, monomer.

It is found in the cytoplasm. The catalysed reaction is (2R)-3-phosphoglycerate + ATP = (2R)-3-phospho-glyceroyl phosphate + ADP. The protein operates within carbohydrate degradation; glycolysis; pyruvate from D-glyceraldehyde 3-phosphate: step 2/5. This is Phosphoglycerate kinase from Staphylococcus saprophyticus subsp. saprophyticus (strain ATCC 15305 / DSM 20229 / NCIMB 8711 / NCTC 7292 / S-41).